Here is a 405-residue protein sequence, read N- to C-terminus: Formate-dependent phosphoribosylglycinamide formyltransferase (405 aa).

N(1)-(5-phospho-beta-D-ribosyl)glycinamide is bound by residues 22–23 and Glu82; that span reads EL. ATP contacts are provided by residues Arg115, Lys162, 167-172, 202-205, and Glu210; these read SSGKGQ and EGFI. An ATP-grasp domain is found at 120 to 320; sequence RLAAETLGLA…EFELHARAIL (201 aa). Mg(2+) is bound by residues Glu279 and Glu291. Residues Asp298, Lys367, and 374 to 375 contribute to the N(1)-(5-phospho-beta-D-ribosyl)glycinamide site; that span reads RR.

It belongs to the PurK/PurT family. In terms of assembly, homodimer.

The catalysed reaction is N(1)-(5-phospho-beta-D-ribosyl)glycinamide + formate + ATP = N(2)-formyl-N(1)-(5-phospho-beta-D-ribosyl)glycinamide + ADP + phosphate + H(+). It functions in the pathway purine metabolism; IMP biosynthesis via de novo pathway; N(2)-formyl-N(1)-(5-phospho-D-ribosyl)glycinamide from N(1)-(5-phospho-D-ribosyl)glycinamide (formate route): step 1/1. Its function is as follows. Involved in the de novo purine biosynthesis. Catalyzes the transfer of formate to 5-phospho-ribosyl-glycinamide (GAR), producing 5-phospho-ribosyl-N-formylglycinamide (FGAR). Formate is provided by PurU via hydrolysis of 10-formyl-tetrahydrofolate. The polypeptide is Formate-dependent phosphoribosylglycinamide formyltransferase (Delftia acidovorans (strain DSM 14801 / SPH-1)).